A 103-amino-acid chain; its full sequence is Small ribosomal subunit protein uS10 (103 aa).

It belongs to the universal ribosomal protein uS10 family. As to quaternary structure, part of the 30S ribosomal subunit.

Involved in the binding of tRNA to the ribosomes. This chain is Small ribosomal subunit protein uS10, found in Colwellia psychrerythraea (strain 34H / ATCC BAA-681) (Vibrio psychroerythus).